An 85-amino-acid chain; its full sequence is uncharacterized protein (85 aa).

Residues 39–59 (FILFEISMYIIFIVTFCYKII) traverse the membrane as a helical segment.

The protein resides in the host membrane. This is an uncharacterized protein from Gallid herpesvirus 2 (strain Chicken/Md5/ATCC VR-987) (GaHV-2).